The chain runs to 290 residues: Cilia- and flagella-associated protein 298-A (290 aa).

It belongs to the CFAP298 family.

It localises to the cytoplasm. It is found in the cytoskeleton. The protein resides in the cilium basal body. Plays a role in motile cilium function, possibly by acting on outer dynein arm assembly. Seems to be important for initiation rather than maintenance of cilium motility. Required for correct positioning of the cilium at the apical cell surface, suggesting an additional role in the planar cell polarity (PCP) pathway. May suppress canonical Wnt signaling activity. The sequence is that of Cilia- and flagella-associated protein 298-A (cfap298-a) from Xenopus laevis (African clawed frog).